Reading from the N-terminus, the 427-residue chain is Serine hydroxymethyltransferase (427 aa).

120–122 (GHI) serves as a coordination point for (6S)-5,6,7,8-tetrahydrofolate. At Lys-226 the chain carries N6-(pyridoxal phosphate)lysine.

This sequence belongs to the SHMT family. Homodimer. Pyridoxal 5'-phosphate is required as a cofactor.

The protein localises to the cytoplasm. Its pathway is amino-acid biosynthesis; glycine biosynthesis; glycine from L-serine: step 1/1. Catalyzes the reversible interconversion of serine and glycine with a modified folate serving as the one-carbon carrier. Also exhibits a pteridine-independent aldolase activity toward beta-hydroxyamino acids, producing glycine and aldehydes, via a retro-aldol mechanism. The sequence is that of Serine hydroxymethyltransferase from Pyrococcus furiosus (strain ATCC 43587 / DSM 3638 / JCM 8422 / Vc1).